A 64-amino-acid polypeptide reads, in one-letter code: MYLMYTINENGDRVYTLKKRTEDGRPTLSAHPARFSPEDKYSRQRLTIKKRFGLLLTQKPEPIY.

This sequence belongs to the NOP10 family. As to quaternary structure, component of the box H/ACA small nucleolar ribonucleoprotein (H/ACA snoRNP) complex consisting of Nop60B, Gar1, NPH2 and Nop10, and associated with H/ACA-type snoRNAs.

The protein resides in the nucleus. Its subcellular location is the nucleolus. Functionally, component of the box H/ACA small nucleolar ribonucleoprotein (H/ACA snoRNP) complex, which catalyzes pseudouridylation of rRNA. This involves the isomerization of uridine such that the ribose is subsequently attached to C5, instead of the normal N1. Pseudouridine ('psi') residues may serve to stabilize the conformation of rRNAs. Required for ribosome biogenesis. H/ACA snoRNP complex-dependent ribosome biogenesis is important in female germline cell differentiation during oogenesis. This Drosophila melanogaster (Fruit fly) protein is H/ACA ribonucleoprotein complex subunit 3.